The chain runs to 158 residues: 2-C-methyl-D-erythritol 2,4-cyclodiphosphate synthase (158 aa).

A divalent metal cation-binding residues include Asp8 and His10. 4-CDP-2-C-methyl-D-erythritol 2-phosphate is bound by residues 8–10 (DVH) and 34–35 (HS). His42 serves as a coordination point for a divalent metal cation. 4-CDP-2-C-methyl-D-erythritol 2-phosphate is bound by residues 56–58 (DIG), 61–65 (FPDDD), 132–135 (TTFE), and Phe139.

Belongs to the IspF family. Homotrimer. The cofactor is a divalent metal cation.

The enzyme catalyses 4-CDP-2-C-methyl-D-erythritol 2-phosphate = 2-C-methyl-D-erythritol 2,4-cyclic diphosphate + CMP. The protein operates within isoprenoid biosynthesis; isopentenyl diphosphate biosynthesis via DXP pathway; isopentenyl diphosphate from 1-deoxy-D-xylulose 5-phosphate: step 4/6. In terms of biological role, involved in the biosynthesis of isopentenyl diphosphate (IPP) and dimethylallyl diphosphate (DMAPP), two major building blocks of isoprenoid compounds. Catalyzes the conversion of 4-diphosphocytidyl-2-C-methyl-D-erythritol 2-phosphate (CDP-ME2P) to 2-C-methyl-D-erythritol 2,4-cyclodiphosphate (ME-CPP) with a corresponding release of cytidine 5-monophosphate (CMP). This is 2-C-methyl-D-erythritol 2,4-cyclodiphosphate synthase from Natranaerobius thermophilus (strain ATCC BAA-1301 / DSM 18059 / JW/NM-WN-LF).